Here is a 426-residue protein sequence, read N- to C-terminus: 4-aminobutyrate aminotransferase GabT (426 aa).

Residues 111–112 (GS) and Gln-242 each bind pyridoxal 5'-phosphate. Lys-268 is modified (N6-(pyridoxal phosphate)lysine). Thr-297 serves as a coordination point for pyridoxal 5'-phosphate.

Belongs to the class-III pyridoxal-phosphate-dependent aminotransferase family. Homotetramer. Pyridoxal 5'-phosphate serves as cofactor.

The catalysed reaction is 4-aminobutanoate + 2-oxoglutarate = succinate semialdehyde + L-glutamate. It catalyses the reaction 5-aminopentanoate + 2-oxoglutarate = 5-oxopentanoate + L-glutamate. Its pathway is amino-acid degradation; 4-aminobutanoate degradation. It participates in amino-acid degradation. Pyridoxal phosphate-dependent enzyme that catalyzes transamination between primary amines and alpha-keto acids. Catalyzes the transfer of the amino group from gamma-aminobutyrate (GABA) to alpha-ketoglutarate (KG) to yield succinic semialdehyde (SSA) and glutamate. Thereby functions in a GABA degradation pathway that allows some E.coli strains to utilize GABA as a nitrogen source for growth. Also catalyzes the conversion of 5-aminovalerate to glutarate semialdehyde, as part of a L-lysine degradation pathway that proceeds via cadaverine, glutarate and L-2-hydroxyglutarate. The chain is 4-aminobutyrate aminotransferase GabT (gabT) from Escherichia coli (strain K12).